Reading from the N-terminus, the 197-residue chain is dCTP deaminase, dUMP-forming (197 aa).

Residues Arg105 to Arg110, Asp123, Thr131 to Glu133, Gln152, Tyr166, Lys174, and Gln178 each bind dCTP. Residue Glu133 is the Proton donor/acceptor of the active site.

Belongs to the dCTP deaminase family. As to quaternary structure, homotrimer.

The enzyme catalyses dCTP + 2 H2O = dUMP + NH4(+) + diphosphate. Its pathway is pyrimidine metabolism; dUMP biosynthesis; dUMP from dCTP: step 1/1. In terms of biological role, bifunctional enzyme that catalyzes both the deamination of dCTP to dUTP and the hydrolysis of dUTP to dUMP without releasing the toxic dUTP intermediate. This Methanosphaera stadtmanae (strain ATCC 43021 / DSM 3091 / JCM 11832 / MCB-3) protein is dCTP deaminase, dUMP-forming.